The sequence spans 350 residues: tRNA uridine(34) hydroxylase (350 aa).

Positions 146–240 (DDPDALFIDM…YARKARDQGL (95 aa)) constitute a Rhodanese domain. Residue C200 is the Cysteine persulfide intermediate of the active site.

The protein belongs to the TrhO family.

It catalyses the reaction uridine(34) in tRNA + AH2 + O2 = 5-hydroxyuridine(34) in tRNA + A + H2O. Its function is as follows. Catalyzes oxygen-dependent 5-hydroxyuridine (ho5U) modification at position 34 in tRNAs, the first step in 5-carboxymethoxyuridine (cmo5U) biosynthesis. May be part of an alternate pathway, which is able to bypass cmo5U biogenesis in a subset of tRNAs under aerobic conditions. The sequence is that of tRNA uridine(34) hydroxylase from Escherichia coli O6:K15:H31 (strain 536 / UPEC).